A 269-amino-acid polypeptide reads, in one-letter code: Phosphatidylglycerol--prolipoprotein diacylglyceryl transferase (269 aa).

Helical transmembrane passes span 17 to 37, 56 to 76, 92 to 112, 120 to 140, 174 to 194, 202 to 222, and 237 to 257; these read LKIH…WLLA, LVFW…VLFY, WKGG…ALWF, FFEL…AGRI, PSQL…LWLY, MAVS…VEFV, and LTMG…LIWL. Arg-139 provides a ligand contact to a 1,2-diacyl-sn-glycero-3-phospho-(1'-sn-glycerol).

It belongs to the Lgt family.

The protein resides in the cell inner membrane. It carries out the reaction L-cysteinyl-[prolipoprotein] + a 1,2-diacyl-sn-glycero-3-phospho-(1'-sn-glycerol) = an S-1,2-diacyl-sn-glyceryl-L-cysteinyl-[prolipoprotein] + sn-glycerol 1-phosphate + H(+). Its pathway is protein modification; lipoprotein biosynthesis (diacylglyceryl transfer). Catalyzes the transfer of the diacylglyceryl group from phosphatidylglycerol to the sulfhydryl group of the N-terminal cysteine of a prolipoprotein, the first step in the formation of mature lipoproteins. This chain is Phosphatidylglycerol--prolipoprotein diacylglyceryl transferase, found in Pseudomonas putida (strain W619).